Reading from the N-terminus, the 275-residue chain is Phospholipid scramblase (275 aa).

The helical transmembrane segment at 256-272 threads the bilayer; it reads WKMMLLAFALFLDYMYY.

Belongs to the phospholipid scramblase family. As to quaternary structure, forms homooligomers in the presence of calcium. It depends on Ca(2+) as a cofactor. Mg(2+) is required as a cofactor.

It localises to the membrane. Its subcellular location is the cell membrane. The catalysed reaction is a 1,2-diacyl-sn-glycero-3-phosphoethanolamine(in) = a 1,2-diacyl-sn-glycero-3-phosphoethanolamine(out). In terms of biological role, catalyzes calcium-induced ATP-independent rapid bidirectional and non-specific movement of phospholipids (lipid scrambling or lipid flip-flop) between the inner and outer leaflet of the plasma membrane resulting in collapse of the phospholipid asymmetry. Preferentially, mediates calcium-dependent phosphatidylethanolamine externalization. During the liver stage, plays a role in the interaction with, and thus invasion of, host hepatocytes. Dispensable for host erythrocyte invasion and asexual parasite development. This is Phospholipid scramblase from Plasmodium falciparum (isolate 3D7).